A 1266-amino-acid polypeptide reads, in one-letter code: MIAHKQKKAKKKRVWASGQLSAAITTSEMGLKSVSSNSIFDPEYIKELVNDIRKFSHVLLYLKEAILSDCFKEVIHIRLDELLHMSKHQNLNSVDLQNAAETLASKVKAVNFTEVNDENKNDLFREVFSSIETLAFTFGNILTNFLMGDVGNDSILRLPISRESKSFENISMDSVDLPHEKGNFSPIELDNLLLKNSDSIELALSYAKTWSKYTKNIVSWVEKKLNLELESTRNIVKLAEATRSSIGIQEFMPLQSLFTNALLNDIHSSHLLQQTIAALQANKFVQPLLGRKNEMEKQRKEIKELWKQQQNKLLETETALKKAKLLCMQRQDEYEKAKSSMFRAEEEQLSSSVGLGKNLNKLLEKRRRLEEEALQKVEEANEHYKVCVTNVEERRNDLENTKREILTQLRTLVFQCDLTLKAVTVNLFHMQQLQAASLANSLQSLCDSAKLYDPGQEYSEFVKATSSSELEEKVDGNVNKQIASSPQTSGYEPADSLEDVARLPDSCHKLEEDRCSNSADMTGPSFIRSWKFGMFSDSESTGGSSESRSLDSESISPGDFHRKLPRTPSSGTMSSADDLDEREPPSPSEAGPNSLGTFKKTLMSKAALTHKFRKLRSPTKCRDCEGIVMFPGVECEECLLVCHRKCLENLVIVCGHQKLQGKMHIFGAEFIQVAKKEPDGIPFVLKICASEIESRALCLQGIYRVCGNKIKTEKLCQALENGMHLVDISEFSSHDICDVLKLYLRQLPEPFILFRLYKEFIDLAKEIQHVNEEQEAKKDSPEDKKHPHVSIEINRILLRSKDLLRQLPASNFNSLHYLIVHLKRVVDHAEENKMNSKNLGVIFGPTLIRPRPTTAPVTISSLAEYSSQARVVEFLITYAQKIFDGSLQPQAGVIANTGAIAPQVDHGCHPKPLLSPDERDSDHSLKQLFFSSKEDIRTMDCESKTFELTTSFEESERKQNALGKCDAPILDNKVHLLFDQELESASHKTEDTCKSPKLLLLRSDRVANSVQRPTPRTRLRPVSLPVDRLLLLAGSPTERSSRNTGNTDSDKFGKNAAFEGLHRKDNSNTTCSKVNGFDQQNVQKSWDKQNERNSFTAKTTVIIPSAYAEKGLAVSTGNNRGHSSGAAQPSKAHADPARSARDTSEHSSSDSCPVAAVRAPRTLQPQHWTTFYKPPNPTFNVRGTEEKTAFPSAAVPPVLVHAPQSHVAKSDPDLEATLACPVQTSGQPKESSEEPGLPEGTPTCQRPRLKRMQQFEDLEDEIPQFV.

Ser166, Ser171, Ser174, and Ser185 each carry phosphoserine. Positions Ile187–Glu457 constitute an F-BAR domain. Residues Arg291–Val413 are a coiled coil. 3 positions are modified to phosphoserine: Ser496, Ser516, and Ser549. Residues Ser538–Ser556 are compositionally biased toward low complexity. The disordered stretch occupies residues Ser538–Gly596. The segment at Thr609–Cys654 adopts a Phorbol-ester/DAG-type zinc-finger fold. The region spanning Ala668–Phe883 is the Rho-GAP domain. 3 positions are modified to phosphoserine: Ser915, Ser951, and Ser1023. Disordered stretches follow at residues Ala1033–Lys1054, Val1114–Pro1153, and Val1222–Arg1248. Residues Ser1115–Ala1127 show a composition bias toward polar residues. The segment covering Ala1132–Ser1148 has biased composition (basic and acidic residues). Phosphoserine occurs at positions 1149 and 1151. An interaction with PTPN13/PTPL1 region spans residues Pro1263–Val1266.

In terms of assembly, interacts with PTPN13/PTPL1. Interacts with RAP2A via its coiled coil domain. Interacts with RASIP1.

GTPase activator for the Rho-type GTPases by converting them to an inactive GDP-bound state. Has strong activity toward RHOA, and weaker activity toward RAC1 and CDC42. May act as a specific effector of RAP2A to regulate Rho. In concert with RASIP1, suppresses RhoA signaling and dampens ROCK and MYH9 activities in endothelial cells and plays an essential role in blood vessel tubulogenesis. The chain is Rho GTPase-activating protein 29 (Arhgap29) from Rattus norvegicus (Rat).